Reading from the N-terminus, the 467-residue chain is MSSLPTVLVIGAGLAGSEAAWQIAQAGVPVRLIEMRPIKQSPAHYSSEFAELVCSNSFGALSSDRAAGLLKEELRRLGSIVIRTADSHAVPAGGALAVNRASFSASLTKELSAHPLITIERHEQEHLPGEGQITVLATGPLTSELLAENLRTFTGRSECHFFDAASPIIEGESIDLTLAFRASRYDKGDADYMNCPMDKGQYLAFREALLNAEQAELKEFDKESAKFFEGCLPIEELARRGEDTMRYGPLKPIGLWDPRWGDLNDRDVRRSKRAYAVVQLRKEDHEGRLWNLVGFQTNLKWSEQKRVLKMIPGLHQAEFVRFGVMHRNTFLEAPQLLEPTLQFSKRSNLLAAGQITGTEGYTAAVAGGWLAGSNAARLAMGLNTITLPSTTMIGALTHFVSDSDCFRDRKGEFQPMPANFGLLPELAERIHAKRERYGAYRDRALTMLEEAQQQWGMSKAPVQIGSS.

Position 11–16 (11–16 (GAGLAG)) interacts with FAD.

It belongs to the MnmG family. TrmFO subfamily. The cofactor is FAD.

It is found in the cytoplasm. The enzyme catalyses uridine(54) in tRNA + (6R)-5,10-methylene-5,6,7,8-tetrahydrofolate + NADH + H(+) = 5-methyluridine(54) in tRNA + (6S)-5,6,7,8-tetrahydrofolate + NAD(+). It carries out the reaction uridine(54) in tRNA + (6R)-5,10-methylene-5,6,7,8-tetrahydrofolate + NADPH + H(+) = 5-methyluridine(54) in tRNA + (6S)-5,6,7,8-tetrahydrofolate + NADP(+). Functionally, catalyzes the folate-dependent formation of 5-methyl-uridine at position 54 (M-5-U54) in all tRNAs. In Prochlorococcus marinus (strain MIT 9303), this protein is Methylenetetrahydrofolate--tRNA-(uracil-5-)-methyltransferase TrmFO.